Here is a 311-residue protein sequence, read N- to C-terminus: tRNA-cytidine(32) 2-sulfurtransferase (311 aa).

The PP-loop motif signature appears at 47–52 (SGGKDS). [4Fe-4S] cluster-binding residues include C122, C125, and C213.

It belongs to the TtcA family. In terms of assembly, homodimer. Requires Mg(2+) as cofactor. The cofactor is [4Fe-4S] cluster.

The protein resides in the cytoplasm. It catalyses the reaction cytidine(32) in tRNA + S-sulfanyl-L-cysteinyl-[cysteine desulfurase] + AH2 + ATP = 2-thiocytidine(32) in tRNA + L-cysteinyl-[cysteine desulfurase] + A + AMP + diphosphate + H(+). It functions in the pathway tRNA modification. Catalyzes the ATP-dependent 2-thiolation of cytidine in position 32 of tRNA, to form 2-thiocytidine (s(2)C32). The sulfur atoms are provided by the cysteine/cysteine desulfurase (IscS) system. In Pectobacterium carotovorum subsp. carotovorum (strain PC1), this protein is tRNA-cytidine(32) 2-sulfurtransferase.